The chain runs to 373 residues: Inhibitor of nuclear factor kappa-B kinase-interacting protein (373 aa).

A compositionally biased stretch (basic residues) spans 1-11 (MSEVKSRKKPG). A disordered region spans residues 1–38 (MSEVKSRKKPGPKVAAPEPEKRSDGRKNPEARGDAGWA). Basic and acidic residues predominate over residues 18–33 (EPEKRSDGRKNPEARG). Residues 43–59 (GLSLLSLAMTLGLAWLV) form a helical membrane-spanning segment. Coiled coils occupy residues 86 to 257 (LQSK…NKLS) and 285 to 324 (QDLIGTERKMEELTMQMFNMEDDMLRAVSEIMEMQKTLEG). Asparagine 151 carries N-linked (GlcNAc...) asparagine glycosylation.

In terms of processing, N-glycosylated at Asn-151.

The protein resides in the endoplasmic reticulum membrane. In terms of biological role, target of p53/TP53 with pro-apoptotic function. The sequence is that of Inhibitor of nuclear factor kappa-B kinase-interacting protein (Ikbip) from Mus musculus (Mouse).